Consider the following 235-residue polypeptide: Leucyl/phenylalanyl-tRNA--protein transferase (235 aa).

Belongs to the L/F-transferase family.

The protein resides in the cytoplasm. It catalyses the reaction N-terminal L-lysyl-[protein] + L-leucyl-tRNA(Leu) = N-terminal L-leucyl-L-lysyl-[protein] + tRNA(Leu) + H(+). The catalysed reaction is N-terminal L-arginyl-[protein] + L-leucyl-tRNA(Leu) = N-terminal L-leucyl-L-arginyl-[protein] + tRNA(Leu) + H(+). The enzyme catalyses L-phenylalanyl-tRNA(Phe) + an N-terminal L-alpha-aminoacyl-[protein] = an N-terminal L-phenylalanyl-L-alpha-aminoacyl-[protein] + tRNA(Phe). In terms of biological role, functions in the N-end rule pathway of protein degradation where it conjugates Leu, Phe and, less efficiently, Met from aminoacyl-tRNAs to the N-termini of proteins containing an N-terminal arginine or lysine. The protein is Leucyl/phenylalanyl-tRNA--protein transferase of Anaeromyxobacter sp. (strain Fw109-5).